Here is a 101-residue protein sequence, read N- to C-terminus: Small ribosomal subunit protein uS14 (101 aa).

It belongs to the universal ribosomal protein uS14 family. In terms of assembly, part of the 30S ribosomal subunit. Contacts proteins S3 and S10.

Binds 16S rRNA, required for the assembly of 30S particles and may also be responsible for determining the conformation of the 16S rRNA at the A site. This is Small ribosomal subunit protein uS14 from Neisseria gonorrhoeae (strain ATCC 700825 / FA 1090).